A 162-amino-acid chain; its full sequence is Transcription elongation factor GreA (162 aa).

A coiled-coil region spans residues Glu-45 to Glu-74.

This sequence belongs to the GreA/GreB family.

Necessary for efficient RNA polymerase transcription elongation past template-encoded arresting sites. The arresting sites in DNA have the property of trapping a certain fraction of elongating RNA polymerases that pass through, resulting in locked ternary complexes. Cleavage of the nascent transcript by cleavage factors such as GreA or GreB allows the resumption of elongation from the new 3'terminus. GreA releases sequences of 2 to 3 nucleotides. The polypeptide is Transcription elongation factor GreA (Rickettsia prowazekii (strain Madrid E)).